A 181-amino-acid chain; its full sequence is ATP synthase subunit delta (181 aa).

This sequence belongs to the ATPase delta chain family. As to quaternary structure, F-type ATPases have 2 components, F(1) - the catalytic core - and F(0) - the membrane proton channel. F(1) has five subunits: alpha(3), beta(3), gamma(1), delta(1), epsilon(1). F(0) has three main subunits: a(1), b(2) and c(10-14). The alpha and beta chains form an alternating ring which encloses part of the gamma chain. F(1) is attached to F(0) by a central stalk formed by the gamma and epsilon chains, while a peripheral stalk is formed by the delta and b chains.

The protein resides in the cell inner membrane. Its function is as follows. F(1)F(0) ATP synthase produces ATP from ADP in the presence of a proton or sodium gradient. F-type ATPases consist of two structural domains, F(1) containing the extramembraneous catalytic core and F(0) containing the membrane proton channel, linked together by a central stalk and a peripheral stalk. During catalysis, ATP synthesis in the catalytic domain of F(1) is coupled via a rotary mechanism of the central stalk subunits to proton translocation. Functionally, this protein is part of the stalk that links CF(0) to CF(1). It either transmits conformational changes from CF(0) to CF(1) or is implicated in proton conduction. The polypeptide is ATP synthase subunit delta (Chlorobium phaeovibrioides (strain DSM 265 / 1930) (Prosthecochloris vibrioformis (strain DSM 265))).